Here is a 100-residue protein sequence, read N- to C-terminus: Succinate dehydrogenase assembly factor 4, mitochondrial (100 aa).

The transit peptide at 1–31 (MFNRNLRAVILKNYNKALTRCLHDAGNLKRP) directs the protein to the mitochondrion. A disordered region spans residues 24–100 (DAGNLKRPTP…YSYEGRVTDF (77 aa)). Basic and acidic residues-rich tracts occupy residues 36 to 68 (LPKEQQEEWDRLQKESSKRPVDVMRREKHKDFE) and 85 to 100 (PTVHGDYSYEGRVTDF).

This sequence belongs to the SDHAF4 family. In terms of assembly, interacts with sdh1 in its FAD-bound form.

The protein resides in the mitochondrion matrix. In terms of biological role, plays an essential role in the assembly of succinate dehydrogenase (SDH), an enzyme complex (also referred to as respiratory complex II) that is a component of both the tricarboxylic acid (TCA) cycle and the mitochondrial electron transport chain, and which couples the oxidation of succinate to fumarate with the reduction of ubiquinone (coenzyme Q) to ubiquinol. Binds to the flavoprotein subunit sdh1 in its FAD-bound form, blocking the generation of excess reactive oxygen species (ROS) and facilitating its assembly with the iron-sulfur protein subunit sdh2 into the SDH catalytic dimer. In Schizosaccharomyces pombe (strain 972 / ATCC 24843) (Fission yeast), this protein is Succinate dehydrogenase assembly factor 4, mitochondrial.